A 1359-amino-acid polypeptide reads, in one-letter code: Regulatory-associated protein of TOR 2 (1359 aa).

Disordered stretches follow at residues 17 to 64 (SSAA…PQVA) and 782 to 819 (SDNS…QHSD). Basic and acidic residues predominate over residues 32-50 (HLVDDHLPVENGPDPRRDV). Polar residues predominate over residues 782–805 (SDNSATARDGRISTSSPIATNSIM). The span at 806-819 (HGSPQSDDSSQHSD) shows a compositional bias: low complexity. WD repeat units lie at residues 1041–1080 (RFEL…PVNT), 1087–1127 (SDRG…GGQK), 1139–1178 (RSAG…VNTI), 1181–1221 (TADS…RLVY), 1228–1269 (PRSE…EPYL), 1273–1312 (AHRG…LTII), and 1321–1359 (QRIG…YQVR).

Belongs to the WD repeat RAPTOR family. In terms of assembly, the target of rapamycin complex 1 (TORC1) is composed of at least RAPTOR, LST8 and TOR.

Its function is as follows. Component of TORC1 complex, which is an essential cell growth regulator that controls plant development. Acts by recruiting substrates for TOR. Acts by activating transcription, protein synthesis and ribosome biogenesis, and inhibiting mRNA degradation and autophagy. This is Regulatory-associated protein of TOR 2 (RAPTOR2) from Oryza sativa subsp. japonica (Rice).